Reading from the N-terminus, the 410-residue chain is Dipeptidase 1 (410 aa).

The first 16 residues, 1–16 (MWTSWWLWPLVAVCTA), serve as a signal peptide directing secretion. The Zn(2+) site is built by H36 and D38. N-linked (GlcNAc...) asparagine glycosylation is present at N57. The cysteines at positions 87 and 170 are disulfide-linked. E141 contacts Zn(2+). H168 is a substrate binding site. The Zn(2+) site is built by H214 and H235. The cysteines at positions 242 and 274 are disulfide-linked. Substrate is bound by residues R246 and D304. A lipid anchor (GPI-anchor amidated serine) is attached at S384. The propeptide at 385-410 (EAPSLHRRPGALLASLSLLLLSLGLL) is removed in mature form.

This sequence belongs to the metallo-dependent hydrolases superfamily. Peptidase M19 family. As to quaternary structure, homodimer; disulfide-linked. Zn(2+) serves as cofactor.

Its subcellular location is the apical cell membrane. The protein resides in the cell projection. The protein localises to the microvillus membrane. It carries out the reaction an L-aminoacyl-L-amino acid + H2O = 2 an L-alpha-amino acid. The enzyme catalyses leukotriene D4 + H2O = leukotriene E4 + glycine. It catalyses the reaction L-cystine-bis-glycine + 2 H2O = L-cystine + 2 glycine. The catalysed reaction is a beta-lactam + H2O = a substituted beta-amino acid. It carries out the reaction glycyldehydrophenylalanine + H2O = 2,3-didehydrophenylalanine + glycine. With respect to regulation, inhibited by L-penicillamine. Beta-lactamase activity is inhibited by cilastatin. Hydrolyzes a wide range of dipeptides including the conversion of leukotriene D4 to leukotriene E4. Hydrolyzes cystinyl-bis-glycine (cys-bis-gly) formed during glutathione degradation. Also possesses beta lactamase activity and hydrolytically inactivates beta-lactam antibiotics. Its function is as follows. Independently of its dipeptidase activity, acts as an adhesion receptor for neutrophil recruitment from bloodstream into inflamed lungs and liver. The polypeptide is Dipeptidase 1 (DPEP1) (Oryctolagus cuniculus (Rabbit)).